The following is a 392-amino-acid chain: L-rhamnonate dehydratase (392 aa).

H22 and R48 together coordinate substrate. D214, E240, and E268 together coordinate Mg(2+). The active-site Proton acceptor is the H318. E338 contacts substrate.

This sequence belongs to the mandelate racemase/muconate lactonizing enzyme family. RhamD subfamily. As to quaternary structure, homooctamer; tetramer of dimers. It depends on Mg(2+) as a cofactor.

The enzyme catalyses L-rhamnonate = 2-dehydro-3-deoxy-L-rhamnonate + H2O. Its function is as follows. Catalyzes the dehydration of L-rhamnonate to 2-keto-3-deoxy-L-rhamnonate (KDR). The sequence is that of L-rhamnonate dehydratase from Burkholderia ambifaria (strain ATCC BAA-244 / DSM 16087 / CCUG 44356 / LMG 19182 / AMMD) (Burkholderia cepacia (strain AMMD)).